Reading from the N-terminus, the 269-residue chain is Tryptophan synthase alpha chain (269 aa).

Catalysis depends on proton acceptor residues E45 and D56.

The protein belongs to the TrpA family. Tetramer of two alpha and two beta chains.

The enzyme catalyses (1S,2R)-1-C-(indol-3-yl)glycerol 3-phosphate + L-serine = D-glyceraldehyde 3-phosphate + L-tryptophan + H2O. Its pathway is amino-acid biosynthesis; L-tryptophan biosynthesis; L-tryptophan from chorismate: step 5/5. The alpha subunit is responsible for the aldol cleavage of indoleglycerol phosphate to indole and glyceraldehyde 3-phosphate. This is Tryptophan synthase alpha chain from Shouchella clausii (strain KSM-K16) (Alkalihalobacillus clausii).